Here is a 103-residue protein sequence, read N- to C-terminus: Small ribosomal subunit protein uS10 (103 aa).

This sequence belongs to the universal ribosomal protein uS10 family. As to quaternary structure, part of the 30S ribosomal subunit.

In terms of biological role, involved in the binding of tRNA to the ribosomes. This is Small ribosomal subunit protein uS10 from Chromobacterium violaceum (strain ATCC 12472 / DSM 30191 / JCM 1249 / CCUG 213 / NBRC 12614 / NCIMB 9131 / NCTC 9757 / MK).